The primary structure comprises 312 residues: Elongation factor Ts (312 aa).

Residues 80–83 (TDFV) form an involved in Mg(2+) ion dislocation from EF-Tu region.

Belongs to the EF-Ts family.

It localises to the cytoplasm. Functionally, associates with the EF-Tu.GDP complex and induces the exchange of GDP to GTP. It remains bound to the aminoacyl-tRNA.EF-Tu.GTP complex up to the GTP hydrolysis stage on the ribosome. The sequence is that of Elongation factor Ts from Paramagnetospirillum magneticum (strain ATCC 700264 / AMB-1) (Magnetospirillum magneticum).